A 344-amino-acid chain; its full sequence is MEWVEIDGSYGEGGGQILRTAVALSVITGKPVRIHRIRANRPNPGLRPQHLHGILALKELSNARVKGAKVGSTVLEFVPGRAEPKHVKVPIKTAGSITLVLQALLPAMAFIGGSFEITGGTDVPWSPPVDYLRNVTLFALEKMGLRAEIELKRRGHYPKGGGLVTGSVEPWESKKPLVALEWNKVDSFAGISHATNLPAHVAERQAKSAEERLREFFNAPVEIETEVSRSLGPGSGIVVWAETDSLRLAGDALGKRGKPAEVVGREAAEELIEQLTPRKAVDRFLGDQLIPFLAFAGGEIGVAEITNHLVTNVWVVERFLGRTFEVEGEIGEPGVVRVVRKAEV.

Residues glutamine 102 and 284–288 (FLGDQ) contribute to the ATP site. The active-site Tele-AMP-histidine intermediate is the histidine 308.

This sequence belongs to the RNA 3'-terminal cyclase family. Type 1 subfamily.

The protein localises to the cytoplasm. It carries out the reaction a 3'-end 3'-phospho-ribonucleotide-RNA + ATP = a 3'-end 2',3'-cyclophospho-ribonucleotide-RNA + AMP + diphosphate. Its function is as follows. Catalyzes the conversion of 3'-phosphate to a 2',3'-cyclic phosphodiester at the end of RNA. The mechanism of action of the enzyme occurs in 3 steps: (A) adenylation of the enzyme by ATP; (B) transfer of adenylate to an RNA-N3'P to produce RNA-N3'PP5'A; (C) and attack of the adjacent 2'-hydroxyl on the 3'-phosphorus in the diester linkage to produce the cyclic end product. The biological role of this enzyme is unknown but it is likely to function in some aspects of cellular RNA processing. This is RNA 3'-terminal phosphate cyclase from Thermococcus gammatolerans (strain DSM 15229 / JCM 11827 / EJ3).